Reading from the N-terminus, the 249-residue chain is Ditrans,polycis-undecaprenyl-diphosphate synthase ((2E,6E)-farnesyl-diphosphate specific) (249 aa).

Aspartate 18 is a catalytic residue. Aspartate 18 is a binding site for Mg(2+). Substrate contacts are provided by residues 19 to 22 (GNNR), phenylalanine 23, lysine 31, histidine 35, and 63 to 65 (SSE). Asparagine 66 serves as the catalytic Proton acceptor. Substrate is bound by residues tryptophan 67, arginine 69, arginine 186, and 192-194 (RLS). Glutamate 205 lines the Mg(2+) pocket.

This sequence belongs to the UPP synthase family. As to quaternary structure, homodimer. Requires Mg(2+) as cofactor.

The catalysed reaction is 8 isopentenyl diphosphate + (2E,6E)-farnesyl diphosphate = di-trans,octa-cis-undecaprenyl diphosphate + 8 diphosphate. Catalyzes the sequential condensation of isopentenyl diphosphate (IPP) with (2E,6E)-farnesyl diphosphate (E,E-FPP) to yield (2Z,6Z,10Z,14Z,18Z,22Z,26Z,30Z,34E,38E)-undecaprenyl diphosphate (di-trans,octa-cis-UPP). UPP is the precursor of glycosyl carrier lipid in the biosynthesis of bacterial cell wall polysaccharide components such as peptidoglycan and lipopolysaccharide. The polypeptide is Ditrans,polycis-undecaprenyl-diphosphate synthase ((2E,6E)-farnesyl-diphosphate specific) (Acinetobacter baylyi (strain ATCC 33305 / BD413 / ADP1)).